The chain runs to 256 residues: Acetyl-coenzyme A carboxylase carboxyl transferase subunit alpha (256 aa).

One can recognise a CoA carboxyltransferase C-terminal domain in the interval M1–Q236.

It belongs to the AccA family. In terms of assembly, acetyl-CoA carboxylase is a heterohexamer composed of biotin carboxyl carrier protein (AccB), biotin carboxylase (AccC) and two subunits each of ACCase subunit alpha (AccA) and ACCase subunit beta (AccD).

The protein resides in the cytoplasm. The catalysed reaction is N(6)-carboxybiotinyl-L-lysyl-[protein] + acetyl-CoA = N(6)-biotinyl-L-lysyl-[protein] + malonyl-CoA. It functions in the pathway lipid metabolism; malonyl-CoA biosynthesis; malonyl-CoA from acetyl-CoA: step 1/1. Its function is as follows. Component of the acetyl coenzyme A carboxylase (ACC) complex. First, biotin carboxylase catalyzes the carboxylation of biotin on its carrier protein (BCCP) and then the CO(2) group is transferred by the carboxyltransferase to acetyl-CoA to form malonyl-CoA. The protein is Acetyl-coenzyme A carboxylase carboxyl transferase subunit alpha of Streptococcus equi subsp. equi (strain 4047).